The primary structure comprises 744 residues: Polyribonucleotide nucleotidyltransferase (744 aa).

Residues Asp-487 and Asp-493 each coordinate Mg(2+). One can recognise a KH domain in the interval 554–613 (PSTTTLKVDKDKIRDIIGPGGKVIKEICETSGAKIDISDDGTVSIYASDKDKLKVALDKV). The S1 motif domain occupies 623 to 691 (GEVFNGTVMK…NKGKAKLTIK (69 aa)). The disordered stretch occupies residues 691 to 744 (KNAEKDKSSANPKPKNSPKEHQEPEKRDNGKKRAWNEDNNAETTEVVTERKYFS). A compositionally biased stretch (basic and acidic residues) spans 707-718 (SPKEHQEPEKRD). Residues 727 to 736 (EDNNAETTEV) show a composition bias toward polar residues.

It belongs to the polyribonucleotide nucleotidyltransferase family. It depends on Mg(2+) as a cofactor.

It is found in the cytoplasm. It catalyses the reaction RNA(n+1) + phosphate = RNA(n) + a ribonucleoside 5'-diphosphate. Its function is as follows. Involved in mRNA degradation. Catalyzes the phosphorolysis of single-stranded polyribonucleotides processively in the 3'- to 5'-direction. The protein is Polyribonucleotide nucleotidyltransferase of Rickettsia bellii (strain OSU 85-389).